Reading from the N-terminus, the 145-residue chain is 3-hydroxyacyl-[acyl-carrier-protein] dehydratase FabZ (145 aa).

His49 is a catalytic residue.

The protein belongs to the thioester dehydratase family. FabZ subfamily.

The protein resides in the cytoplasm. The catalysed reaction is a (3R)-hydroxyacyl-[ACP] = a (2E)-enoyl-[ACP] + H2O. Functionally, involved in unsaturated fatty acids biosynthesis. Catalyzes the dehydration of short chain beta-hydroxyacyl-ACPs and long chain saturated and unsaturated beta-hydroxyacyl-ACPs. This Ehrlichia ruminantium (strain Gardel) protein is 3-hydroxyacyl-[acyl-carrier-protein] dehydratase FabZ.